Here is a 428-residue protein sequence, read N- to C-terminus: tRNA(Ile)-lysidine synthase (428 aa).

28–33 (SGGVDS) provides a ligand contact to ATP.

This sequence belongs to the tRNA(Ile)-lysidine synthase family.

It localises to the cytoplasm. It catalyses the reaction cytidine(34) in tRNA(Ile2) + L-lysine + ATP = lysidine(34) in tRNA(Ile2) + AMP + diphosphate + H(+). In terms of biological role, ligates lysine onto the cytidine present at position 34 of the AUA codon-specific tRNA(Ile) that contains the anticodon CAU, in an ATP-dependent manner. Cytidine is converted to lysidine, thus changing the amino acid specificity of the tRNA from methionine to isoleucine. The sequence is that of tRNA(Ile)-lysidine synthase from Streptococcus pyogenes serotype M6 (strain ATCC BAA-946 / MGAS10394).